Reading from the N-terminus, the 562-residue chain is Nucleoprotein (562 aa).

Residues 53 to 238 form a binding site for the cap structure m7GTP region; it reads MRRDKRDESD…ITQEESQINI (186 aa). Mn(2+)-binding residues include aspartate 381 and glutamate 383. Zn(2+) is bound by residues glutamate 391, cysteine 498, histidine 501, and cysteine 522. Position 526 (aspartate 526) interacts with Mn(2+).

The protein belongs to the arenaviridae nucleocapsid protein family. As to quaternary structure, homomultimerizes to form the nucleocapsid. Binds to viral genomic RNA. Interacts with glycoprotein G2. Interacts with protein Z; this interaction probably directs the encapsidated genome to budding sites. Interacts with protein L; this interaction does not interfere with Z-L interaction. Interacts with host IKBKE (via Protein kinase domain); the interaction inhibits IKBKE kinase activity.

The protein resides in the virion. It is found in the host cytoplasm. In terms of biological role, encapsidates the genome, protecting it from nucleases. The encapsidated genomic RNA is termed the nucleocapsid (NC). Serves as template for viral transcription and replication. The increased presence of protein N in host cell does not seem to trigger the switch from transcription to replication as observed in other negative strain RNA viruses. Through the interaction with host IKBKE, strongly inhibits the phosphorylation and nuclear translocation of host IRF3, a protein involved in interferon activation pathway, leading to the inhibition of interferon-beta and IRF3-dependent promoters activation. Also encodes a functional 3'-5' exoribonuclease that degrades preferentially dsRNA substrates and thereby participates in the suppression of interferon induction. This is Nucleoprotein from Bear Canyon mammarenavirus (isolate Mouse/United States/AV A0070039/2000) (BCNV).